Here is a 153-residue protein sequence, read N- to C-terminus: Small ribosomal subunit protein bS16 (153 aa).

Residues 121–131 (AEAAAKAKAEA) show a composition bias toward basic and acidic residues. The segment at 121 to 153 (AEAAAKAKAEAEAAAAAEEAPAEEAAEEAPAED) is disordered. The segment covering 140–153 (APAEEAAEEAPAED) has biased composition (acidic residues).

The protein belongs to the bacterial ribosomal protein bS16 family.

The sequence is that of Small ribosomal subunit protein bS16 from Bifidobacterium longum (strain DJO10A).